A 156-amino-acid chain; its full sequence is Small ribosomal subunit protein uS7 (156 aa).

It belongs to the universal ribosomal protein uS7 family. As to quaternary structure, part of the 30S ribosomal subunit. Contacts proteins S9 and S11.

One of the primary rRNA binding proteins, it binds directly to 16S rRNA where it nucleates assembly of the head domain of the 30S subunit. Is located at the subunit interface close to the decoding center, probably blocks exit of the E-site tRNA. This is Small ribosomal subunit protein uS7 from Exiguobacterium sibiricum (strain DSM 17290 / CCUG 55495 / CIP 109462 / JCM 13490 / 255-15).